A 473-amino-acid polypeptide reads, in one-letter code: MKTLYSLRRFYPVETLFNGTLALAGRDQETTGFAWWAGNARLINLSGKLLGAHVAHAGLIVFWAGAMNLFEVAHFVPEKPMYEQGLILLPHLATLGWGVGPGGEVIDTFPYFVSGVLHLISSAVLGFGGIYHALLGPETLEESFPFFGYVWKDRNKMTTILGIHLILLGIGAFLLVLKALYFGGVYDTWAPGGGDVRKITNLTLSPGVIFGYLLKSPFGGEGWIVSVDDLEDIIGGHVWLGSICILGGIWHILTKPFAWARRAFVWSGEAYLSYSLGALSVFGFIACCFVWFNNTAYPSEFYGPTGPEASQAQAFTFLVRDQRLGANVGSAQGPTGLGKYLMRSPTGEVIFGGETMRFWDLRAPWLEPLRGPNGLDLSRLKKDIQPWQERRSAEYMTHAPLGSLNSVGGVATEINAVNYVSPRSWLATSHFVLGFFLFVGHLWHAGRARAAAAGFEKGIDRDFEPVLSMTPLN.

The propeptide occupies 1 to 14; sequence MKTLYSLRRFYPVE. Thr15 carries the post-translational modification N-acetylthreonine. A Phosphothreonine modification is found at Thr15. 5 helical membrane-spanning segments follow: residues 69–93, 134–155, 178–200, 255–275, and 291–312; these read LFEVAHFVPEKPMYEQGLILLPHLA, LLGPETLEESFPFFGYVWKDRN, KALYFGGVYDTWAPGGGDVRKIT, KPFAWARRAFVWSGEAYLSYS, and WFNNTAYPSEFYGPTGPEASQA. Glu367 lines the [CaMn4O5] cluster pocket. A helical membrane pass occupies residues 447–471; it reads RARAAAAGFEKGIDRDFEPVLSMTP.

It belongs to the PsbB/PsbC family. PsbC subfamily. PSII is composed of 1 copy each of membrane proteins PsbA, PsbB, PsbC, PsbD, PsbE, PsbF, PsbH, PsbI, PsbJ, PsbK, PsbL, PsbM, PsbT, PsbX, PsbY, PsbZ, Psb30/Ycf12, at least 3 peripheral proteins of the oxygen-evolving complex and a large number of cofactors. It forms dimeric complexes. Binds multiple chlorophylls and provides some of the ligands for the Ca-4Mn-5O cluster of the oxygen-evolving complex. It may also provide a ligand for a Cl- that is required for oxygen evolution. PSII binds additional chlorophylls, carotenoids and specific lipids. serves as cofactor.

Its subcellular location is the plastid. The protein resides in the chloroplast thylakoid membrane. In terms of biological role, one of the components of the core complex of photosystem II (PSII). It binds chlorophyll and helps catalyze the primary light-induced photochemical processes of PSII. PSII is a light-driven water:plastoquinone oxidoreductase, using light energy to abstract electrons from H(2)O, generating O(2) and a proton gradient subsequently used for ATP formation. This Calycanthus floridus var. glaucus (Eastern sweetshrub) protein is Photosystem II CP43 reaction center protein.